Here is a 129-residue protein sequence, read N- to C-terminus: Glycine cleavage system H protein (129 aa).

One can recognise a Lipoyl-binding domain in the interval 24-106; it reads IAVIGISAYA…YEQGWLLKVQ (83 aa). Lysine 65 is modified (N6-lipoyllysine).

Belongs to the GcvH family. In terms of assembly, the glycine cleavage system is composed of four proteins: P, T, L and H. The cofactor is (R)-lipoate.

In terms of biological role, the glycine cleavage system catalyzes the degradation of glycine. The H protein shuttles the methylamine group of glycine from the P protein to the T protein. The chain is Glycine cleavage system H protein from Synechococcus elongatus (strain ATCC 33912 / PCC 7942 / FACHB-805) (Anacystis nidulans R2).